The primary structure comprises 336 residues: Dihydroorotate dehydrogenase (quinone) (336 aa).

Residues 62–66 (AGLDK) and T86 contribute to the FMN site. Residue K66 coordinates substrate. Residue 111–115 (NRMGF) participates in substrate binding. 2 residues coordinate FMN: N139 and N172. Substrate is bound at residue N172. The active-site Nucleophile is the S175. N177 contacts substrate. Residues K217 and T245 each coordinate FMN. A substrate-binding site is contributed by 246 to 247 (NT). FMN-binding positions include G268, G297, and 318–319 (YS).

The protein belongs to the dihydroorotate dehydrogenase family. Type 2 subfamily. Monomer. It depends on FMN as a cofactor.

The protein resides in the cell membrane. It catalyses the reaction (S)-dihydroorotate + a quinone = orotate + a quinol. It functions in the pathway pyrimidine metabolism; UMP biosynthesis via de novo pathway; orotate from (S)-dihydroorotate (quinone route): step 1/1. Catalyzes the conversion of dihydroorotate to orotate with quinone as electron acceptor. The sequence is that of Dihydroorotate dehydrogenase (quinone) from Enterobacter sp. (strain 638).